A 575-amino-acid chain; its full sequence is 2-isopropylmalate synthase (575 aa).

Positions 40-314 constitute a Pyruvate carboxyltransferase domain; the sequence is PRWCAVDLRD…DPQIDFSDID (275 aa). Mg(2+) is bound by residues Asp-49, His-253, His-255, and Asn-289. The regulatory domain stretch occupies residues 456–575; sequence SGSGTPEWGR…IVSAVNRALR (120 aa).

This sequence belongs to the alpha-IPM synthase/homocitrate synthase family. LeuA type 2 subfamily. In terms of assembly, homodimer. Mg(2+) serves as cofactor.

The protein resides in the cytoplasm. The catalysed reaction is 3-methyl-2-oxobutanoate + acetyl-CoA + H2O = (2S)-2-isopropylmalate + CoA + H(+). Its pathway is amino-acid biosynthesis; L-leucine biosynthesis; L-leucine from 3-methyl-2-oxobutanoate: step 1/4. Functionally, catalyzes the condensation of the acetyl group of acetyl-CoA with 3-methyl-2-oxobutanoate (2-ketoisovalerate) to form 3-carboxy-3-hydroxy-4-methylpentanoate (2-isopropylmalate). This chain is 2-isopropylmalate synthase, found in Kineococcus radiotolerans (strain ATCC BAA-149 / DSM 14245 / SRS30216).